Here is a 95-residue protein sequence, read N- to C-terminus: Glutamyl-tRNA(Gln) amidotransferase subunit C (95 aa).

This sequence belongs to the GatC family. Heterotrimer of A, B and C subunits.

It carries out the reaction L-glutamyl-tRNA(Gln) + L-glutamine + ATP + H2O = L-glutaminyl-tRNA(Gln) + L-glutamate + ADP + phosphate + H(+). It catalyses the reaction L-aspartyl-tRNA(Asn) + L-glutamine + ATP + H2O = L-asparaginyl-tRNA(Asn) + L-glutamate + ADP + phosphate + 2 H(+). Allows the formation of correctly charged Asn-tRNA(Asn) or Gln-tRNA(Gln) through the transamidation of misacylated Asp-tRNA(Asn) or Glu-tRNA(Gln) in organisms which lack either or both of asparaginyl-tRNA or glutaminyl-tRNA synthetases. The reaction takes place in the presence of glutamine and ATP through an activated phospho-Asp-tRNA(Asn) or phospho-Glu-tRNA(Gln). This chain is Glutamyl-tRNA(Gln) amidotransferase subunit C, found in Rhizobium meliloti (strain 1021) (Ensifer meliloti).